The following is a 104-amino-acid chain: MSPLKKTYVLKLYVAGNTPNSVRALKTLKEILEQEFQGVYALKVIDVLKNPQLAEEDKILATPTLSKILPPPVRKIIGDLSDREKVLIGLDLLYEELNEDEYNL.

Belongs to the KaiB family. As to quaternary structure, the KaiABC complex composition changes during the circadian cycle to control KaiC phosphorylation. Complexes KaiC(6), KaiA(2-4):KaiC(6), KaiB(6):KaiC(6) and KaiC(6):KaiB(6):KaiA(12) are among the most important forms, many form cooperatively. Undergoes a major conformational rearrangment; in the free state forms homotetramers as a dimer of dimers. When bound to the CI domain of KaiC switches to a monomeric thioredoxin-fold (KaiB(fs)). KaiB(fs) binds CikA, leading it to dephosphorylate phospho-RpaA.

Its function is as follows. Key component of the KaiABC oscillator complex, which constitutes the main circadian regulator in cyanobacteria. Complex composition changes during the circadian cycle to control KaiC phosphorylation. KaiA stimulates KaiC autophosphorylation, while KaiB sequesters KaiA, leading to KaiC autodephosphorylation. Phospho-Ser-431 KaiC accumulation triggers binding of KaiB to form the KaiB(6):KaiC(6) complex, leading to changes in output regulators CikA and SasA. KaiB switches to a thioredoxin-like fold (KaiB(fs)) when bound to KaiC. KaiB(6):KaiC(6) formation exposes a site for KaiA binding that sequesters KaiA from KaiC, making the KaiC(6):KaiB(6):KaiA(12) complex that results in KaiC autodephosphorylation. In terms of biological role, a metamorphic protein which reversibly switches between an inactive tetrameric fold and a rare, thioredoxin-like monomeric fold (KaiB(fs)). KaiB(fs) binds phospho-KaiC, KaiA and CikA. KaiA and CikA compete for binding to KaiB(fs), and KaiB(fs) and SasA compete for binding to KaiC, thus the clock oscillator and output signal pathway are tightly coupled. The sequence is that of Circadian clock oscillator protein KaiB from Trichodesmium erythraeum (strain IMS101).